Consider the following 187-residue polypeptide: Ribonuclease HII (187 aa).

One can recognise an RNase H type-2 domain in the interval 1-187; it reads MIILGIDEAG…YKPVQVLLNE (187 aa). Residues aspartate 7, glutamate 8, and aspartate 99 each contribute to the a divalent metal cation site.

It belongs to the RNase HII family. Mn(2+) is required as a cofactor. Requires Mg(2+) as cofactor.

It is found in the cytoplasm. The enzyme catalyses Endonucleolytic cleavage to 5'-phosphomonoester.. Functionally, endonuclease that specifically degrades the RNA of RNA-DNA hybrids. This is Ribonuclease HII from Francisella tularensis subsp. holarctica (strain FTNF002-00 / FTA).